The following is a 295-amino-acid chain: Autophagy-related protein 37 (295 aa).

The ACB domain occupies 5–103 (VDRVFVHALN…LIDTMHRYAT (99 aa)). Disordered stretches follow at residues 124–162 (NSPS…PLKE) and 174–201 (LRSQ…RWQR). Over residues 125 to 153 (SPSSSLSSPRPNQSTGAGAQQPQQEPEQA) the composition is skewed to low complexity. N136 carries N-linked (GlcNAc...) asparagine glycosylation. Residues 244–264 (WLLVKHIFADLVILSVVLLWL) traverse the membrane as a helical segment.

Belongs to the ATG37 family.

Its subcellular location is the peroxisome membrane. Functionally, acyl-CoA binding protein which acts as the peroxisome receptor for pexophagy. Required for both micropexophagy and macropexophagy, but not for the cytoplasm to vacuole transport (Cvt) or autophagy pathways. Required for functional micropexophagic apparatus (MIPA) and relocation of ATG11 to the peroxisome-sequestering arms of the vacuole. Binds palmitoyl-CoA but not oleyl-CoA. This chain is Autophagy-related protein 37, found in Gibberella zeae (strain ATCC MYA-4620 / CBS 123657 / FGSC 9075 / NRRL 31084 / PH-1) (Wheat head blight fungus).